Here is a 157-residue protein sequence, read N- to C-terminus: Aspartate carbamoyltransferase regulatory chain (157 aa).

Residues cysteine 108, cysteine 113, cysteine 138, and cysteine 141 each contribute to the Zn(2+) site.

This sequence belongs to the PyrI family. As to quaternary structure, contains catalytic and regulatory chains. Requires Zn(2+) as cofactor.

Involved in allosteric regulation of aspartate carbamoyltransferase. In Ignicoccus hospitalis (strain KIN4/I / DSM 18386 / JCM 14125), this protein is Aspartate carbamoyltransferase regulatory chain.